The chain runs to 282 residues: E3 ubiquitin-protein ligase RNF217 (282 aa).

Residues 1–218 (MSCRVCLEDR…LSIFGCKYRY (218 aa)) are TRIAD supradomain. The Zn(2+) site is built by Cys-3, Cys-6, Cys-23, Cys-26, Cys-123, Cys-126, His-131, Cys-136, Cys-163, and Cys-166. The RING-type 1 zinc finger occupies 3 to 49 (CRVCLEDRSIKPLPCCKKPVCDECLKRYLSSQVQLGQAEIQCPITEC). Residues 68-136 (IKYKYFLELS…HAPWHEGVNC (69 aa)) form an IBR-type zinc finger. An RING-type 2; atypical zinc finger spans residues 163 to 192 (CPRCKVHIQRTEGCDHMTCSQCNTNFCYRC). Cys-176 is a catalytic residue. Zn(2+) is bound by residues Cys-181, Cys-184, Cys-189, Cys-192, His-205, and Cys-214. The chain crosses the membrane as a helical span at residues 243 to 263 (LLIVLGLVLGALAVVIGLFGL).

Belongs to the RBR family. RNF217 subfamily.

The protein localises to the cytoplasm. It is found in the membrane. It carries out the reaction [E2 ubiquitin-conjugating enzyme]-S-ubiquitinyl-L-cysteine + [acceptor protein]-L-lysine = [E2 ubiquitin-conjugating enzyme]-L-cysteine + [acceptor protein]-N(6)-ubiquitinyl-L-lysine.. Its pathway is protein modification; protein ubiquitination. E3 ubiquitin-protein ligase which accepts ubiquitin from E2 ubiquitin-conjugating enzymes in the form of a thioester and then directly transfers the ubiquitin to targeted substrates. Mediates the degradation of the iron exporter ferroportin/SLC40A1 and thus regulates iron homeostasis. The chain is E3 ubiquitin-protein ligase RNF217 (rnf217) from Xenopus laevis (African clawed frog).